A 60-amino-acid chain; its full sequence is Cytotoxin 1 (60 aa).

Intrachain disulfides connect Cys-3-Cys-21, Cys-14-Cys-38, Cys-42-Cys-53, and Cys-54-Cys-59.

It belongs to the three-finger toxin family. Short-chain subfamily. Type IA cytotoxin sub-subfamily. As to quaternary structure, monomer in solution; Homodimer and oligomer in the presence of negatively charged lipids forming a pore with a size ranging between 20 and 30 Angstroms. Expressed by the venom gland.

The protein localises to the secreted. It is found in the target cell membrane. Shows cytolytic activity on many different cells by forming pore in lipid membranes. In vivo, increases heart rate or kills the animal by cardiac arrest. In addition, it binds to heparin with high affinity, interacts with Kv channel-interacting protein 1 (KCNIP1) in a calcium-independent manner, and binds to integrin alpha-V/beta-3 (ITGAV/ITGB3) with moderate affinity. The chain is Cytotoxin 1 from Naja mossambica (Mozambique spitting cobra).